We begin with the raw amino-acid sequence, 88 residues long: Meiosis expressed gene 1 protein homolog (88 aa).

This sequence belongs to the MEIG1 family. Interacts with PACRG. Interacts with MORN3.

Essential for spermiogenesis. This chain is Meiosis expressed gene 1 protein homolog, found in Homo sapiens (Human).